Reading from the N-terminus, the 294-residue chain is Undecaprenyl-diphosphatase (294 aa).

9 helical membrane passes run 2-22, 27-47, 65-85, 110-130, 135-155, 172-192, 215-235, 239-259, and 272-292; these read SMIYITLNIIAYVIDVRSLIL, LVFSLILGIVEGLTEFLPISS, VIAFTVIIQLGAILSITKIFW, LCIRHIFLGTFPGIMLGMIFY, LIFELTYIMYGLIIGGIFLLV, ITYLQAFLIGCFQCLAFWPGF, FSFFLAVPIIFGSAVLTLYHY, IGLMDVLLLIAGSATAFFIAL, and VSLIPFAIYRFLLAGGIYWGL.

This sequence belongs to the UppP family.

The protein localises to the cell inner membrane. The catalysed reaction is di-trans,octa-cis-undecaprenyl diphosphate + H2O = di-trans,octa-cis-undecaprenyl phosphate + phosphate + H(+). In terms of biological role, catalyzes the dephosphorylation of undecaprenyl diphosphate (UPP). Confers resistance to bacitracin. The chain is Undecaprenyl-diphosphatase from Blochmanniella pennsylvanica (strain BPEN).